A 690-amino-acid chain; its full sequence is MPVYAKAIFGSFPSVQQVRVENGERCLIEAMDELNKNEKGLYRPVRLENGDQISTTDDVLNGKLARVSYTPFEEFELVSNSKGSCMEYENQEQSSKIMEQMRILRQTEELCDVELLVAGSVIRAHRYILAAASPYFKAMFTNGMVEMKKLTIELQDIPEESVRIIVDYIYTDKIAITMNNVHQLIFTATVLQMDVIVVACQQFLATMITSHNCMSLYHFSDIYNCTNLISSIEDFASSQFRCIRKSPEFNSISFHHLKSLLNRSDLNVSEEQDVFETIVQWVSSNPRDRQHHFVQLFKTLRLHLVGWNFLCEAVNSNSYVKNSQECREIISAMVLDAMTPSKRKHPESNHENTSEYSASMACPSLTASSSSSTSTFRKSVAGAIFCAGGRGKAGGPFSSVEAYDWRRNQWIEVPDMMSQRRHVGVVSANGNLYAIGGHDGTAHLATAEAFQPSIRQWKRIASMKTARRGIAVASIENVIYAVGGLDDTTCYKTVERYDIEEDEWSTVADMDVQRGGVGVAVIGRYLFAIGGNDGTSSLETCERFDPMIDKWKRIASMKNRRAGSGVCVLDGYLYAIGGFDDNAPLETCERYDPDADKWITLDKMSSPRGGVGVAALGGKVYAIGGHDGSDYLNTVECYDPIANRWQPAAEIKECRAGAGVAWANVRMHQLSRTPEKCDSGCAPSGGSYCI.

Positions 111 to 178 constitute a BTB domain; it reads CDVELLVAGS…IYTDKIAITM (68 aa). One can recognise a BACK domain in the interval 213–314; it reads CMSLYHFSDI…VGWNFLCEAV (102 aa). 6 Kelch repeats span residues 383–430, 431–477, 478–524, 525–571, 572–618, and 620–665; these read AIFC…SANG, NLYA…SIEN, VIYA…VIGR, YLFA…VLDG, YLYA…ALGG, and VYAI…WANV.

In terms of assembly, component of the BCR(kel-8) E3 ubiquitin ligase complex, at least composed of cul-3, kel-8 and rbx-1. Interacts with rpy-1. In terms of tissue distribution, expressed in neurons.

The protein resides in the synapse. Its pathway is protein modification; protein ubiquitination. Its function is as follows. Substrate-specific adapter of a BCR (BTB-CUL3-RBX1) E3 ubiquitin ligase complex that regulates degradation of glutamate receptors in neurons. The BCR(kel-8) ubiquitin ligase complex mediates ubiquitination and subsequent degradation of rpy-1. Indirectly regulates the protein turnover of glr-1, possibly via ubiquitination and degradation of rpy-1. This chain is Kelch-like protein 8 (kel-8), found in Caenorhabditis elegans.